Reading from the N-terminus, the 358-residue chain is Protein RecA 2 (358 aa).

69–76 (GPESSGKT) lines the ATP pocket. The tract at residues 331 to 358 (GIGKSGAPSPRRRTSPRRPKVAARSAAV) is disordered. Basic residues predominate over residues 340–351 (PRRRTSPRRPKV).

This sequence belongs to the RecA family.

Its subcellular location is the cytoplasm. Functionally, can catalyze the hydrolysis of ATP in the presence of single-stranded DNA, the ATP-dependent uptake of single-stranded DNA by duplex DNA, and the ATP-dependent hybridization of homologous single-stranded DNAs. It interacts with LexA causing its activation and leading to its autocatalytic cleavage. This chain is Protein RecA 2, found in Myxococcus xanthus.